A 233-amino-acid chain; its full sequence is ATP-dependent Clp protease proteolytic subunit 1 (233 aa).

Serine 116 functions as the Nucleophile in the catalytic mechanism. Histidine 141 is an active-site residue.

It belongs to the peptidase S14 family. As to quaternary structure, fourteen ClpP subunits assemble into 2 heptameric rings which stack back to back to give a disk-like structure with a central cavity, resembling the structure of eukaryotic proteasomes.

It localises to the cytoplasm. The enzyme catalyses Hydrolysis of proteins to small peptides in the presence of ATP and magnesium. alpha-casein is the usual test substrate. In the absence of ATP, only oligopeptides shorter than five residues are hydrolyzed (such as succinyl-Leu-Tyr-|-NHMec, and Leu-Tyr-Leu-|-Tyr-Trp, in which cleavage of the -Tyr-|-Leu- and -Tyr-|-Trp bonds also occurs).. Its function is as follows. Cleaves peptides in various proteins in a process that requires ATP hydrolysis. Has a chymotrypsin-like activity. Plays a major role in the degradation of misfolded proteins. The protein is ATP-dependent Clp protease proteolytic subunit 1 of Salinibacter ruber (strain DSM 13855 / M31).